We begin with the raw amino-acid sequence, 355 residues long: Guanine nucleotide-binding protein G(i) subunit alpha-2 (355 aa).

Residue glycine 2 is the site of N-myristoyl glycine attachment. Cysteine 3 carries S-palmitoyl cysteine lipidation. The G-alpha domain maps to 32–355; sequence REVKLLLLGA…KNNLKDCGLF (324 aa). A G1 motif region spans residues 35–48; sequence KLLLLGAGESGKST. Residues 40–47, 176–182, 201–205, 270–273, and alanine 327 each bind GTP; these read GAGESGKS, LRTRVKT, DVGGQ, and NKKD. Serine 47 and threonine 182 together coordinate Mg(2+). The tract at residues 174 to 182 is G2 motif; that stretch reads DVLRTRVKT. The tract at residues 197–206 is G3 motif; that stretch reads FKMFDVGGQR. The segment at 266–273 is G4 motif; the sequence is ILFLNKKD. Residues 325–330 are G5 motif; that stretch reads TCATDT.

This sequence belongs to the G-alpha family. G(i/o/t/z) subfamily. As to quaternary structure, g proteins are composed of 3 units; alpha, beta and gamma. The alpha chain contains the guanine nucleotide binding site.

Its subcellular location is the cytoplasm. It localises to the cytoskeleton. The protein localises to the microtubule organizing center. The protein resides in the centrosome. It is found in the cell membrane. In terms of biological role, guanine nucleotide-binding proteins (G proteins) are involved as modulators or transducers in various transmembrane signaling systems. The G(i) proteins are involved in hormonal regulation of adenylate cyclase: they inhibit the cyclase in response to beta-adrenergic stimuli. May play a role in cell division. This Oryzias latipes (Japanese rice fish) protein is Guanine nucleotide-binding protein G(i) subunit alpha-2 (gnai2).